The primary structure comprises 662 residues: Probable actin-related protein 8 (662 aa).

Basic and acidic residues-rich tracts occupy residues 50-59 (AGEKDAKETE) and 67-77 (TKQDDSKKSQV). The segment at 50 to 92 (AGEKDAKETESESANGDTKQDDSKKSQVEEEEDGIEESELGEE) is disordered. Acidic residues predominate over residues 78–89 (EEEEDGIEESEL). 339-342 (DMGA) lines the ATP pocket.

This sequence belongs to the actin family. As to quaternary structure, component of the chromatin remodeling Ino80 complex. Exists as monomers and dimers, but the dimer is most probably the biologically relevant form required for stable interactions with histones that exploits the twofold symmetry of the nucleosome core.

It is found in the nucleus. In terms of biological role, probably involved in transcription regulation via its interaction with the INO80 complex, a chromatin remodeling complex. Exhibits low basal ATPase activity, and unable to polymerize. Strongly prefer nucleosomes and H3-H4 tetramers over H2A-H2B dimers, suggesting it may act as a nucleosome recognition module within the complex. The polypeptide is Probable actin-related protein 8 (Schizosaccharomyces pombe (strain 972 / ATCC 24843) (Fission yeast)).